Here is a 657-residue protein sequence, read N- to C-terminus: Sodium/glucose cotransporter 4 (657 aa).

The Extracellular portion of the chain corresponds to 1–24 (MPASPEPVTATPEPEEVPAKFTLE). Residues 25-45 (AADIAVVVVYFVFVLAVGIWS) form a helical membrane-spanning segment. Residues 46 to 79 (SIRANRGTVGGYFLAGRSMTWWPIGASLMSSNVG) are Cytoplasmic-facing. Residues 80–100 (SGLFIGLAGTGAAGGLAVGGF) form a helical membrane-spanning segment. At 101-104 (EWNA) the chain is on the extracellular side. Residues 105–125 (AWVLIALGWIFVPVYISAGVV) form a helical membrane-spanning segment. Residues 126 to 147 (TMPEYLRKRFGGQRIRIYMSVL) are Cytoplasmic-facing. The chain crosses the membrane as a helical span at residues 148–168 (SLILYILTKISTDIFSGALFI). Topologically, residues 169–180 (QVSLGWDLYLST) are extracellular. A helical membrane pass occupies residues 181 to 201 (VILLAVTALYTIAGGLTAVIY). Over 202-207 (TDALQT) the chain is Cytoplasmic. A helical transmembrane segment spans residues 208–228 (VIMVIGAFVLMFIAFDKVGWY). Residues 229–265 (EGLLVQYEKAAPALTVPNTTCHLPRSDAFHIFRDPVT) lie on the Extracellular side of the membrane. A glycan (N-linked (GlcNAc...) asparagine) is linked at asparagine 246. Residues 266-286 (GDIPWPGLIFGLTVLATWVWC) form a helical membrane-spanning segment. Topologically, residues 287 to 307 (TDQVIVQRSLSAKNLSHAKAG) are cytoplasmic. Residues 308 to 328 (SVLGGYLKVFPMFFVVMPGMI) form a helical membrane-spanning segment. At 329–373 (SRALYPDEVACVDPDECQKICGAKVGCSNIAYPKLVVELMPVGMR) the chain is on the extracellular side. The helical transmembrane segment at 374–396 (GLMIAVMMAALMSSLTSIFNSSS) threads the bilayer. The Cytoplasmic segment spans residues 397-417 (TLFTMDIWQRIRPRASEKELM). The helical transmembrane segment at 418–438 (VVGRVFILLLVALSIVWIPVI) threads the bilayer. At 439 to 451 (QTANSGQLFDYIQ) the chain is on the extracellular side. A helical membrane pass occupies residues 452–472 (AITSFLSPPITTVFIMAIFWG). Residues 473–478 (RVNEQG) are Cytoplasmic-facing. The helical transmembrane segment at 479 to 499 (AFWGLMVGLVVGMVRMIMEFV) threads the bilayer. Residues 500–520 (YGTPSCGETDLRPSLLKDVHY) lie on the Extracellular side of the membrane. The helical transmembrane segment at 521 to 541 (LYFALILLALTVLIITAVSLC) threads the bilayer. Over 542–636 (TAPIPEKHLV…SIEEDHMWKT (95 aa)) the chain is Cytoplasmic. A helical transmembrane segment spans residues 637 to 657 (VCNVNALILLTANVFLWGYFA).

Belongs to the sodium:solute symporter (SSF) (TC 2.A.21) family.

The protein resides in the membrane. Its function is as follows. Probable sodium-dependent sugar transporter. The sequence is that of Sodium/glucose cotransporter 4 (slc5a9) from Danio rerio (Zebrafish).